We begin with the raw amino-acid sequence, 128 residues long: MQKRVRNRLITIIICFCSACLGISIILYNLEKNIVFFLPPSKINEIEQGQELRVGGLVKTDSINKIADDKISFVITDNIKDCEILYQGALPALFRKGQGIIAIGQLSNGKFIARQLLAKHDENYRPPQ.

Over 1–8 (MQKRVRNR) the chain is Cytoplasmic. The helical; Signal-anchor for type II membrane protein transmembrane segment at 9–29 (LITIIICFCSACLGISIILYN) threads the bilayer. Residues 30–128 (LEKNIVFFLP…KHDENYRPPQ (99 aa)) are Periplasmic-facing. The heme site is built by H120 and Y124.

It belongs to the CcmE/CycJ family.

The protein resides in the cell inner membrane. Its function is as follows. Heme chaperone required for the biogenesis of c-type cytochromes. Transiently binds heme delivered by CcmC and transfers the heme to apo-cytochromes in a process facilitated by CcmF and CcmH. The chain is Cytochrome c-type biogenesis protein CcmE from Rickettsia conorii (strain ATCC VR-613 / Malish 7).